Reading from the N-terminus, the 263-residue chain is R-spondin-1 (263 aa).

The N-terminal stretch at methionine 1–serine 20 is a signal peptide. FU repeat units lie at residues alanine 34–aspartate 85 and methionine 91–alanine 135. Disulfide bonds link cysteine 40/cysteine 47, cysteine 44/cysteine 53, cysteine 56/cysteine 75, cysteine 79/cysteine 94, cysteine 97/cysteine 105, cysteine 102/cysteine 111, cysteine 114/cysteine 125, cysteine 129/cysteine 142, cysteine 148/cysteine 190, cysteine 159/cysteine 166, and cysteine 199/cysteine 206. Asparagine 137 carries N-linked (GlcNAc...) asparagine glycosylation. Positions glutamine 147 to proline 207 constitute a TSP type-1 domain. 2 C-linked (Man) tryptophan glycosylation sites follow: tryptophan 153 and tryptophan 156. Positions cysteine 206–alanine 263 are disordered. Positions glycine 218–glutamate 234 are enriched in basic and acidic residues.

The protein belongs to the R-spondin family. In terms of assembly, interacts with the extracellular domain of FZD8 and LRP6. It however does not form a ternary complex with FZD8 and LRP6. Interacts with WNT1. Binds heparin. Interacts with ZNRF3; promoting indirect interaction between ZNRF3 and LGR4 and membrane clearance of ZNRF3. Interacts with LGR4, LGR5 and LGR6. Identified in a complex composed of RNF43, LGR5 and RSPO1. Interacts (via FU repeats) with KREM1. In terms of processing, C-, and N-glycosylated. N-glycosylation at Asn-137, negatively influences its secretion and enhancing effect on Wnt/beta-catenin signaling. C-mannosylation at Trp-156 by DPY19L3 is required for its secretion and regulates the enhancing activity of Wnt signaling. In terms of tissue distribution, abundantly expressed in adrenal glands, ovary, testis, thyroid and trachea but not in bone marrow, spinal cord, stomach, leukocytes colon, small intestine, prostate, thymus and spleen.

It localises to the secreted. Its subcellular location is the nucleus. Its function is as follows. Activator of the canonical Wnt signaling pathway by acting as a ligand for LGR4-6 receptors. Upon binding to LGR4-6 (LGR4, LGR5 or LGR6), LGR4-6 associate with phosphorylated LRP6 and frizzled receptors that are activated by extracellular Wnt receptors, triggering the canonical Wnt signaling pathway to increase expression of target genes. Also regulates the canonical Wnt/beta-catenin-dependent pathway and non-canonical Wnt signaling by acting as an inhibitor of ZNRF3, an important regulator of the Wnt signaling pathway. Acts as a ligand for frizzled FZD8 and LRP6. May negatively regulate the TGF-beta pathway. Has a essential roles in ovary determination. Regulates Wnt signaling by antagonizing DKK1/KREM1-mediated internalization of LRP6 through an interaction with KREM1. This is R-spondin-1 (RSPO1) from Homo sapiens (Human).